We begin with the raw amino-acid sequence, 86 residues long: MGRKDAATIKLPVDQYRKQIGKQDYKKTKPILRATKLKAEAKKTAIGIKEVGLVLAAILALLLAFYAFFYLRLTTDDDPDLDQDED.

A helical transmembrane segment spans residues 51–71 (VGLVLAAILALLLAFYAFFYL).

Belongs to the TRIQK family.

It is found in the endoplasmic reticulum membrane. May play a role in cell growth and maintenance of cell morphology. The sequence is that of Triple QxxK/R motif-containing protein (TRIQK) from Pongo abelii (Sumatran orangutan).